We begin with the raw amino-acid sequence, 525 residues long: Eukaryotic translation initiation factor 3 subunit L (525 aa).

The segment covering methionine 1–tyrosine 19 has biased composition (acidic residues). A disordered region spans residues methionine 1–glycine 21. Residues aspartate 296–arginine 502 form the PCI domain.

Belongs to the eIF-3 subunit L family. As to quaternary structure, component of the eukaryotic translation initiation factor 3 (eIF-3) complex.

It localises to the cytoplasm. Component of the eukaryotic translation initiation factor 3 (eIF-3) complex, which is involved in protein synthesis of a specialized repertoire of mRNAs and, together with other initiation factors, stimulates binding of mRNA and methionyl-tRNAi to the 40S ribosome. The eIF-3 complex specifically targets and initiates translation of a subset of mRNAs involved in cell proliferation. The chain is Eukaryotic translation initiation factor 3 subunit L from Nematostella vectensis (Starlet sea anemone).